A 110-amino-acid chain; its full sequence is Transmembrane protein 233 (110 aa).

The interval Met1–Ile32 is disordered. At Met1–Thr42 the chain is on the cytoplasmic side. The span at Tyr22–Ile32 shows a compositional bias: acidic residues. An intramembrane region (helical) is located at residues Ile43–Met63. Residues Ser64–Trp85 lie on the Cytoplasmic side of the membrane. The chain crosses the membrane as a helical span at residues Val86–Phe106. Over Ser107–Pro110 the chain is Extracellular.

It belongs to the CD225/Dispanin family. In terms of assembly, interacts with the giant stinging tree toxin ExTxA (P0DQP3). Interacts with Nav1.7/SCN9A. Interacts with Nav1.1/SCN1A, Nav1.2/SCN2A, Nav1.3/SCN3A, Nav1.4/SCN4A, Nav1.5/SCN5A, and Nav1.6/SCN8A. In terms of tissue distribution, probably expressed in nociceptive neurons. Detected in dorsal root ganglion neurons.

The protein resides in the membrane. Functionally, probable accessory protein of voltage-gated sodium channels. The chain is Transmembrane protein 233 from Mus musculus (Mouse).